Reading from the N-terminus, the 156-residue chain is Small ribosomal subunit protein uS7 (156 aa).

The protein belongs to the universal ribosomal protein uS7 family. Part of the 30S ribosomal subunit. Contacts proteins S9 and S11.

In terms of biological role, one of the primary rRNA binding proteins, it binds directly to 16S rRNA where it nucleates assembly of the head domain of the 30S subunit. Is located at the subunit interface close to the decoding center, probably blocks exit of the E-site tRNA. This is Small ribosomal subunit protein uS7 from Rhodopseudomonas palustris (strain BisA53).